Reading from the N-terminus, the 419-residue chain is N-acylglucosamine 2-epimerase (419 aa).

The tract at residues 185-206 (LLSLVEQLGEEDEELTNMYAEL) is leucine-zipper. S418 bears the Phosphoserine mark.

It belongs to the N-acylglucosamine 2-epimerase family. As to quaternary structure, homodimer. Forms a heterodimer with renin and inhibits its activity.

It catalyses the reaction an N-acyl-D-glucosamine = an N-acyl-D-mannosamine. Its pathway is amino-sugar metabolism; N-acetylneuraminate degradation. In terms of biological role, catalyzes the interconversion of N-acetylglucosamine to N-acetylmannosamine. Involved in the N-glycolylneuraminic acid (Neu5Gc) degradation pathway. This Mus musculus (Mouse) protein is N-acylglucosamine 2-epimerase (Renbp).